The primary structure comprises 393 residues: Exosome complex component RRP45 (393 aa).

The segment at 1–268 (MRDTPLSNCE…SEITELINKA (268 aa)) is ARE binding.

Belongs to the RNase PH family. Component of the RNA exosome complex.

Its subcellular location is the cytoplasm. The protein resides in the nucleus. The protein localises to the nucleolus. It is found in the nucleoplasm. In terms of biological role, non-catalytic component of the RNA exosome complex which has 3'-&gt;5' exoribonuclease activity and participates in a multitude of cellular RNA processing and degradation events. In the nucleus, the RNA exosome complex is involved in proper maturation of stable RNA species such as rRNA, snRNA and snoRNA, in the elimination of RNA processing by-products and non-coding 'pervasive' transcripts, such as antisense RNA species and promoter-upstream transcripts (PROMPTs), and of mRNAs with processing defects, thereby limiting or excluding their export to the cytoplasm. In the cytoplasm, the RNA exosome complex is involved in general mRNA turnover and specifically degrades inherently unstable mRNAs containing AU-rich elements (AREs) within their 3' untranslated regions, and in RNA surveillance pathways, preventing translation of aberrant mRNAs. The sequence is that of Exosome complex component RRP45 from Danio rerio (Zebrafish).